Here is a 1276-residue protein sequence, read N- to C-terminus: Histone-lysine N-methyltransferase PRDM16 (1276 aa).

The segment covering Met1–Leu10 has biased composition (basic residues). Positions Met1 to Tyr68 are disordered. Residues Ala82–Lys211 enclose the SET domain. The C2H2-type 1; atypical zinc finger occupies Phe230–Cys253. 5 consecutive C2H2-type zinc fingers follow at residues His281–His303, Tyr309–His331, Phe337–His360, His366–His388, and Phe394–His416. The C2H2-type 7; atypical zinc finger occupies Ile423 to Cys445. 2 disordered regions span residues Ser533–Gly657 and Pro772–Asp804. A compositionally biased stretch (polar residues) spans Ala561–Thr570. Residues Pro575–Asp597 show a composition bias toward basic and acidic residues. A compositionally biased stretch (low complexity) spans Thr609–Asp624. A compositionally biased stretch (basic and acidic residues) spans Asp632–Ser642. Positions Asp679–Ser1038 are interaction with CTBP1, CTBP2 and ZNF516. Residues Pro739–Leu1276 are mediates interaction with SKI and regulation of TGF-beta signaling. 3 C2H2-type zinc fingers span residues Tyr951–His973, Tyr979–His1002, and Phe1008–His1032. Disordered stretches follow at residues Glu1033–Leu1065 and Ala1105–Ala1163. Positions His1047–Glu1058 are enriched in polar residues. Residues Glu1116–Ser1133 show a composition bias toward acidic residues.

Belongs to the PRDM16 family. Interacts with CEBPA, CEBPB and CEBPD; the interaction is direct. Interacts with PPARG and PPARA; controls brown adipocytes differentiation. Interacts with CTBP1 and CTBP2; represses the expression of WAT-specific genes. Interacts with PPARGC1A and PPARGC1B; interaction with PPARGC1A or PPARGC1B activates the transcription of BAT-specific gene. Interacts with HDAC1, SKI, SMAD2 and SMAD3; the interaction with SKI promotes the recruitment of SMAD3-HDAC1 complex on the promoter of TGF-beta target genes. Interacts with ZNF516; the interaction is direct and may play a role in the transcription of brown adipose tissue-specific gene. As to expression, expressed in uterus and kidney. Expressed in both cardiomyocytes and interstitial cells.

It localises to the nucleus. Its subcellular location is the cytoplasm. It catalyses the reaction L-lysyl(9)-[histone H3] + S-adenosyl-L-methionine = N(6)-methyl-L-lysyl(9)-[histone H3] + S-adenosyl-L-homocysteine + H(+). Binds DNA and functions as a transcriptional regulator. Displays histone methyltransferase activity and monomethylates 'Lys-9' of histone H3 (H3K9me1) in vitro. Probably catalyzes the monomethylation of free histone H3 in the cytoplasm which is then transported to the nucleus and incorporated into nucleosomes where SUV39H methyltransferases use it as a substrate to catalyze histone H3 'Lys-9' trimethylation. Likely to be one of the primary histone methyltransferases along with MECOM/PRDM3 that direct cytoplasmic H3K9me1 methylation. Functions in the differentiation of brown adipose tissue (BAT) which is specialized in dissipating chemical energy in the form of heat in response to cold or excess feeding while white adipose tissue (WAT) is specialized in the storage of excess energy and the control of systemic metabolism. Together with CEBPB, regulates the differentiation of myoblastic precursors into brown adipose cells. Functions as a repressor of TGF-beta signaling. Functionally, binds DNA and functions as a transcriptional regulator. Functions as a repressor of TGF-beta signaling. May regulate granulocyte differentiation. The polypeptide is Histone-lysine N-methyltransferase PRDM16 (Homo sapiens (Human)).